Here is a 475-residue protein sequence, read N- to C-terminus: Subtilisin-like protease PopC (475 aa).

Disordered regions lie at residues 1–27 and 57–106; these read MKSY…EQGE and TLPG…QTGA. The Peptidase S8 domain occupies 165-475; that stretch reads NRGMSSLAER…KTGKGLAVFR (311 aa). Catalysis depends on charge relay system residues Asp201, His243, and Ser423.

The protein belongs to the peptidase S8 family. In terms of assembly, interacts with PopD in non-starving cells.

Its subcellular location is the cytoplasm. The protein localises to the periplasm. It is found in the secreted. With respect to regulation, in non-starving cells, secretion and protease activity are inhibited by formation of a cytoplasmic complex with PopD. In response to starvation, PopD is degraded in a RelA- and FtsH(D)-dependent manner, thereby releasing pre-formed PopC for secretion. Secreted and active during starvation, and rapidly degraded upon secretion. Secretion is significantly and reversibly reduced by carbonyl cyanide m-chlorophenyl hydrazine (CCCP), which dissipates or reduces the proton motive force (PMF), and by nigericin, which affects the pH gradient. In terms of biological role, required for fruiting body formation, a multicellular developmental program that is induced in response to starvation. Acts as a subtilisin-like protease that directly cleaves the CsgA precursor protein (p25) on the cell surface to generate the intercellular C-signal protein (p17) in starving cells. Preferentially acts in cis, i.e. PopC secreted by a cell only cleaves p25 on that cell. May also be important for processing of other protein(s) that are important for development. In Myxococcus xanthus (strain DK1622), this protein is Subtilisin-like protease PopC.